The following is a 200-amino-acid chain: Translation machinery-associated protein 22 (200 aa).

In terms of domain architecture, SUI1 spans 95–166 (VVIRREARTK…EVEAYIHSLL (72 aa)).

It belongs to the DENR family. Interacts with the 40S ribosomal subunit.

The protein localises to the cytoplasm. The chain is Translation machinery-associated protein 22 (TMA22) from Kluyveromyces lactis (strain ATCC 8585 / CBS 2359 / DSM 70799 / NBRC 1267 / NRRL Y-1140 / WM37) (Yeast).